A 291-amino-acid chain; its full sequence is 2-dehydro-3-deoxyphosphooctonate aldolase 2 (291 aa).

At Ala2 the chain carries N-acetylalanine.

This sequence belongs to the KdsA family. In terms of tissue distribution, expressed in roots, apical meristem, emerging leaves, hydathodes of young leaves, styles of mature flowers and funicules of mature siliques.

The protein localises to the cytoplasm. It catalyses the reaction D-arabinose 5-phosphate + phosphoenolpyruvate + H2O = 3-deoxy-alpha-D-manno-2-octulosonate-8-phosphate + phosphate. Functionally, catalyzes the stereospecific condensation of D-arabinose 5-phosphate and phosphoenolpyruvate to form 3-deoxy-D-manno-octulosonate 8-phosphate (KDO-8-phosphate) and inorganic phosphate. Involved in the biosynthesis of 3-deoxy-D-manno-octulosonate (KDO) which is an indispensable component of rhamnogalacturonan II (RG-II), a structurally complex pectic polysaccharide of the primary cell wall. RG-II is essential for the cell wall integrity of rapidly growing tissues and pollen tube growth and elongation. This chain is 2-dehydro-3-deoxyphosphooctonate aldolase 2 (KDSA2), found in Arabidopsis thaliana (Mouse-ear cress).